The primary structure comprises 564 residues: Dihydroxy-acid dehydratase (564 aa).

Residue D80 coordinates Mg(2+). C121 is a [2Fe-2S] cluster binding site. Residues D122 and K123 each contribute to the Mg(2+) site. K123 carries the post-translational modification N6-carboxylysine. Residue C194 participates in [2Fe-2S] cluster binding. E447 serves as a coordination point for Mg(2+). S473 functions as the Proton acceptor in the catalytic mechanism.

It belongs to the IlvD/Edd family. In terms of assembly, homodimer. Requires [2Fe-2S] cluster as cofactor. It depends on Mg(2+) as a cofactor.

The catalysed reaction is (2R)-2,3-dihydroxy-3-methylbutanoate = 3-methyl-2-oxobutanoate + H2O. The enzyme catalyses (2R,3R)-2,3-dihydroxy-3-methylpentanoate = (S)-3-methyl-2-oxopentanoate + H2O. Its pathway is amino-acid biosynthesis; L-isoleucine biosynthesis; L-isoleucine from 2-oxobutanoate: step 3/4. It participates in amino-acid biosynthesis; L-valine biosynthesis; L-valine from pyruvate: step 3/4. Functions in the biosynthesis of branched-chain amino acids. Catalyzes the dehydration of (2R,3R)-2,3-dihydroxy-3-methylpentanoate (2,3-dihydroxy-3-methylvalerate) into 2-oxo-3-methylpentanoate (2-oxo-3-methylvalerate) and of (2R)-2,3-dihydroxy-3-methylbutanoate (2,3-dihydroxyisovalerate) into 2-oxo-3-methylbutanoate (2-oxoisovalerate), the penultimate precursor to L-isoleucine and L-valine, respectively. In Listeria monocytogenes serotype 4b (strain CLIP80459), this protein is Dihydroxy-acid dehydratase.